We begin with the raw amino-acid sequence, 469 residues long: Deoxyribodipyrimidine photo-lyase (469 aa).

The Photolyase/cryptochrome alpha/beta domain maps to 1–133; it reads MRLVWFRRDL…IWSAFDDKCV (133 aa). Residue glutamate 107 coordinates (6R)-5,10-methylene-5,6,7,8-tetrahydrofolate.

It belongs to the DNA photolyase class-1 family. As to quaternary structure, monomer. FAD serves as cofactor. The cofactor is (6R)-5,10-methylene-5,6,7,8-tetrahydrofolate.

The enzyme catalyses cyclobutadipyrimidine (in DNA) = 2 pyrimidine residues (in DNA).. In terms of biological role, involved in repair of UV radiation-induced DNA damage. Catalyzes the light-dependent monomerization (300-600 nm) of cyclobutyl pyrimidine dimers (in cis-syn configuration), which are formed between adjacent bases on the same DNA strand upon exposure to ultraviolet radiation. This Vibrio cholerae serotype O1 (strain ATCC 39315 / El Tor Inaba N16961) protein is Deoxyribodipyrimidine photo-lyase (phrA).